A 329-amino-acid chain; its full sequence is Beta-ketoacyl-[acyl-carrier-protein] synthase III (329 aa).

Catalysis depends on residues C114 and H255. An ACP-binding region spans residues 256–260 (QANQR). The active site involves N285.

The protein belongs to the thiolase-like superfamily. FabH family. In terms of assembly, homodimer.

The protein localises to the cytoplasm. The enzyme catalyses malonyl-[ACP] + acetyl-CoA + H(+) = 3-oxobutanoyl-[ACP] + CO2 + CoA. Its pathway is lipid metabolism; fatty acid biosynthesis. Its function is as follows. Catalyzes the condensation reaction of fatty acid synthesis by the addition to an acyl acceptor of two carbons from malonyl-ACP. Catalyzes the first condensation reaction which initiates fatty acid synthesis and may therefore play a role in governing the total rate of fatty acid production. Possesses both acetoacetyl-ACP synthase and acetyl transacylase activities. Its substrate specificity determines the biosynthesis of branched-chain and/or straight-chain of fatty acids. The protein is Beta-ketoacyl-[acyl-carrier-protein] synthase III of Thermosynechococcus vestitus (strain NIES-2133 / IAM M-273 / BP-1).